The following is a 327-amino-acid chain: Zinc transport protein ZntB (327 aa).

The Cytoplasmic portion of the chain corresponds to 1-273 (MEAIKGSDVN…ARRTYTMSLM (273 aa)). A helical transmembrane segment spans residues 274–294 (AMVFLPSTFLTGLFGVNLGGI). Residues 295 to 300 (PGGGWQ) lie on the Periplasmic side of the membrane. Residues 301–321 (FGFSIFCILLVVLIGGVALWL) form a helical membrane-spanning segment. Residues 322–327 (YRSKWL) are Cytoplasmic-facing.

This sequence belongs to the CorA metal ion transporter (MIT) (TC 1.A.35) family.

The protein localises to the cell inner membrane. It catalyses the reaction Zn(2+)(out) + H(+)(out) = Zn(2+)(in) + H(+)(in). In terms of biological role, zinc transporter. Acts as a Zn(2+):proton symporter, which likely mediates zinc ion uptake. In Shigella flexneri serotype 5b (strain 8401), this protein is Zinc transport protein ZntB.